Consider the following 314-residue polypeptide: tRNA pseudouridine synthase B (314 aa).

His-43 lines the substrate pocket. Asp-48 (nucleophile) is an active-site residue. 3 residues coordinate substrate: Tyr-76, Tyr-179, and Leu-200.

The protein belongs to the pseudouridine synthase TruB family. Type 1 subfamily.

The catalysed reaction is uridine(55) in tRNA = pseudouridine(55) in tRNA. Functionally, responsible for synthesis of pseudouridine from uracil-55 in the psi GC loop of transfer RNAs. This is tRNA pseudouridine synthase B from Shigella flexneri.